Here is an 893-residue protein sequence, read N- to C-terminus: 104 kDa microneme/rhoptry antigen (893 aa).

A signal peptide spans 1 to 19 (MKFLVLLFNILCLFPILGA). Disordered stretches follow at residues 492–666 (SKKK…FDPK), 681–799 (KTKE…PTGK), and 818–873 (KEHM…RKPD). Basic and acidic residues-rich tracts occupy residues 525 to 565 (SESK…EHKP) and 573 to 591 (KRPEFPKKSKSPKRPESPK). Low complexity predominate over residues 595–606 (RPVSPQRPVSPK). Basic and acidic residues-rich tracts occupy residues 731–755 (EEVKTEDIHSETGEPEEPKRPDSPT), 788–797 (EAGRILRDPT), and 818–830 (KEHMGAEIRKIVV). The span at 831-841 (DDDGTEADDED) shows a compositional bias: acidic residues. Basic residues predominate over residues 851 to 869 (STVRRRRPRPKKSSKSSKP). Aspartate 873 is lipidated: GPI-anchor amidated aspartate. Positions 874-893 (SAFVPSIIFIFLVSLIVGIL) are cleaved as a propeptide — removed in mature form.

It is found in the cell membrane. The protein is 104 kDa microneme/rhoptry antigen of Theileria annulata.